Reading from the N-terminus, the 265-residue chain is Zearalenone hydrolase (265 aa).

Positions 35, 105, and 106 each coordinate zearalenone. Ser105 is an active-site residue. Glu129 is a catalytic residue. The zearalenone site is built by Trp185, Tyr189, and His243. Residue His243 is part of the active site.

It belongs to the AB hydrolase superfamily. Hydrolase RutD family. As to quaternary structure, homodimer.

It catalyses the reaction zearalenone + H2O = hydrolyzed zearalenone + H(+). Lactonohydrolase that specifically hydrolyzes zearalenone (ZEN), an oestrogenic mycotoxin produced by numerous Fusarium specie, into a non-toxic alkylresorcinol product. This Cladophialophora bantiana (strain ATCC 10958 / CDC1940 / 8579 / CBS 173.52) (Xylohypha bantiana) protein is Zearalenone hydrolase.